Here is a 422-residue protein sequence, read N- to C-terminus: Glutamate-1-semialdehyde 2,1-aminomutase (422 aa).

K264 bears the N6-(pyridoxal phosphate)lysine mark.

Belongs to the class-III pyridoxal-phosphate-dependent aminotransferase family. HemL subfamily. As to quaternary structure, homodimer. Pyridoxal 5'-phosphate is required as a cofactor.

It is found in the cytoplasm. It catalyses the reaction (S)-4-amino-5-oxopentanoate = 5-aminolevulinate. Its pathway is porphyrin-containing compound metabolism; protoporphyrin-IX biosynthesis; 5-aminolevulinate from L-glutamyl-tRNA(Glu): step 2/2. The chain is Glutamate-1-semialdehyde 2,1-aminomutase from Clostridium tetani (strain Massachusetts / E88).